Here is an 830-residue protein sequence, read N- to C-terminus: Vacuolar protein sorting-associated protein 11 homolog (830 aa).

The RING-type; atypical zinc finger occupies 733–775; the sequence is CDICREMLSMQSIYFLCQHSFHEECLNYKSTKRQEKFLCIICK.

It belongs to the VPS11 family. Part of the homotypic fusion and vacuole protein sorting (HOPS) complex, composed of Vps16A, car/Vps33A, dor/Vps18, Vps39, Vps11 and lt/Vps41. Unlike in other species, not part of the class C core vacuole/endosome tethering (CORVET) complex.

Its subcellular location is the late endosome membrane. The protein resides in the lysosome membrane. Part of the homotypic fusion and vacuole protein sorting (HOPS) tethering complex involved in endo-lysosomal vesicle trafficking and lysosome biogenesis, but unlike in many other species does not form part of the class C core vacuole/endosome tethering (CORVET) complex. The HOPS complex facilitates docking and fusion of lysosomes with late endosomes and several other types of vesicles. The HOPS complex is also involved in autophagy, pigment granule biogenesis and crinophagy (the elimination of unused secretory granules through fusion with lysosomes). The HOPS complex probably instigates autophagosome-lysosome fusion by binding autophagosome-associated Syx17/syntaxin 17 and promoting assembly of the trans-SNARE complex. Independent of Syx17/syntaxin 17, HOPS is involved in biosynthetic transport to lysosomes and lysosome-related organelles such as eye-pigment granules. Required for autophagocytosis-dependent remodeling of myofibrils and transverse-tubules (T-tubules) during metamorphosis. The chain is Vacuolar protein sorting-associated protein 11 homolog from Drosophila melanogaster (Fruit fly).